We begin with the raw amino-acid sequence, 876 residues long: Leucine--tRNA ligase (876 aa).

A 'HIGH' region motif is present at residues 42–52; it reads PYPSGKLHMGH. A 'KMSKS' region motif is present at residues 634 to 638; sequence KMSKS. Residue Lys637 participates in ATP binding.

This sequence belongs to the class-I aminoacyl-tRNA synthetase family.

Its subcellular location is the cytoplasm. The catalysed reaction is tRNA(Leu) + L-leucine + ATP = L-leucyl-tRNA(Leu) + AMP + diphosphate. This Neisseria meningitidis serogroup B (strain ATCC BAA-335 / MC58) protein is Leucine--tRNA ligase.